The primary structure comprises 311 residues: Porphobilinogen deaminase (311 aa).

At Cys-241 the chain carries S-(dipyrrolylmethanemethyl)cysteine.

Belongs to the HMBS family. As to quaternary structure, monomer. Dipyrromethane serves as cofactor.

The catalysed reaction is 4 porphobilinogen + H2O = hydroxymethylbilane + 4 NH4(+). The protein operates within porphyrin-containing compound metabolism; protoporphyrin-IX biosynthesis; coproporphyrinogen-III from 5-aminolevulinate: step 2/4. In terms of biological role, tetrapolymerization of the monopyrrole PBG into the hydroxymethylbilane pre-uroporphyrinogen in several discrete steps. This chain is Porphobilinogen deaminase, found in Shouchella clausii (strain KSM-K16) (Alkalihalobacillus clausii).